The primary structure comprises 80 residues: Toxin TdNa1 (80 aa).

A signal peptide spans 1–20 (MKGIILFISCLMLIDVVVES). An LCN-type CS-alpha/beta domain is found at 21-79 (RDAYPADWRGCKFSCFWGSSSWCNEECTSLGGSSGYCAWPACWCYGLPDSVRYYNNKCH). Cystine bridges form between cysteine 31–cysteine 78, cysteine 35–cysteine 57, cysteine 43–cysteine 62, and cysteine 47–cysteine 64.

The protein belongs to the long (4 C-C) scorpion toxin superfamily. Sodium channel inhibitor family. Beta subfamily. Expressed by the venom gland.

The protein resides in the secreted. In terms of biological role, inhibits the sodium (Nav) currents in an apparent irreversible manner. Produces small depolarization and induces repetitive firing in squid axons. Is specific for arthropods (crickets, triatomides, crabs and squids), but is non-toxic to mice. This is Toxin TdNa1 from Tityus discrepans (Venezuelan scorpion).